A 276-amino-acid polypeptide reads, in one-letter code: Glutathione S-transferase-like protein ustS (276 aa).

Positions 16–109 (STLPGTSKSW…HLDETYPDPP (94 aa)) constitute a GST N-terminal domain.

Belongs to the GST superfamily.

It functions in the pathway mycotoxin biosynthesis. Glutathione S-transferase-like protein; part of the gene cluster that mediates the biosynthesis of the secondary metabolite ustiloxin B, an antimitotic tetrapeptide. First, ustA is processed by the subtilisin-like endoprotease Kex2 that is outside the ustiloxin B gene cluster, at the C-terminal side of Arg-Lys, after transfer to Golgi apparatus through the endoplasmic reticulum (ER). Cleavage by KEX2 generates 16 peptides YAIG-I to YAIG-XVI. To process the precursor peptide further, at least two peptidases are necessary to cleave the N-terminal and C-terminal sides of the Tyr-Ala-Ile-Gly core peptide which serves as backbone for the synthesis of ustiloxin B, through cyclization and modification of the tyrosine with a non-protein coding amino acid, norvaline. One of the two peptidases must be the serine peptidase ustP; and the other pepdidase is probably ustH. Macrocyclization of the core peptide derived from ustA requires the tyrosinase ustQ, as well as the homologous oxidases ustYa and ustYb, and leads to the production of the first cyclization product N-desmethylustiloxin F. For the formation of N-desmethylustiloxin F, three oxidation steps are required, hydroxylation at the benzylic position, hydroxylation at either the aromatic ring of Tyr or beta-position of Ile, and oxidative cyclization. UstQ may catalyze the oxidation of a phenol moiety, whereas the ustYa and ustYb are most likely responsible for the remaining two-step oxidations. N-desmethylustiloxin F is then methylated by ustM to yield ustiloxin F which in turn substrate of the cytochrome P450 monooxygenase ustC which catalyzes the formation of S-deoxyustiloxin H. The flavoprotein monooxygenases ustF1 and ustF2 then participate in the modification of the side chain of S-deoxyustiloxin H, leading to the synthesis of an oxime intermediate, via ustiloxin H. Finally, carboxylative dehydration performed by the cysteine desulfurase-like protein ustD yields ustiloxin B. The chain is Glutathione S-transferase-like protein ustS from Aspergillus flavus (strain ATCC 200026 / FGSC A1120 / IAM 13836 / NRRL 3357 / JCM 12722 / SRRC 167).